The chain runs to 244 residues: Exosome complex component Rrp41 (244 aa).

The protein belongs to the RNase PH family. Rrp41 subfamily. Component of the archaeal exosome complex. Forms a hexameric ring-like arrangement composed of 3 Rrp41-Rrp42 heterodimers. The hexameric ring associates with a trimer of Rrp4 and/or Csl4 subunits.

Its subcellular location is the cytoplasm. Functionally, catalytic component of the exosome, which is a complex involved in RNA degradation. Has 3'-&gt;5' exoribonuclease activity. Can also synthesize heteromeric RNA-tails. The sequence is that of Exosome complex component Rrp41 from Nitrosopumilus maritimus (strain SCM1).